A 369-amino-acid chain; its full sequence is O-methyltransferase 12 (369 aa).

Residues Gly-181, Asp-204, 229–231 (GDF), Asp-230, Phe-231, and Lys-244 contribute to the S-adenosyl-L-methionine site. Residue His-248 is the Proton acceptor of the active site.

Belongs to the class I-like SAM-binding methyltransferase superfamily. Cation-independent O-methyltransferase family. COMT subfamily.

The catalysed reaction is resorcinol + S-adenosyl-L-methionine = 3-methoxyphenol + S-adenosyl-L-homocysteine + H(+). In terms of biological role, S-adenosyl-L-methionine dependent O-methyltransferase that may be involved in modifying resorcinol ring to synthesize a variant of 4-methyl-5-pentylbenzene-1,3-diol. The sequence is that of O-methyltransferase 12 (omt12) from Dictyostelium discoideum (Social amoeba).